The following is a 573-amino-acid chain: Probable D-xylulose kinase A (573 aa).

Substrate-binding residues include His-97, Arg-168, Asp-284, and Asn-285. ATP-binding positions include Trp-366, 471–472 (GG), and Asn-475.

Belongs to the FGGY kinase family.

The protein resides in the cytoplasm. It catalyses the reaction D-xylulose + ATP = D-xylulose 5-phosphate + ADP + H(+). In terms of biological role, highly specific D-xylulose kinase which participates in the catabolism of xylose. Xylose is a major component of hemicelluloses such as xylan. Most fungi utilize D-xylose via three enzymatic reactions, xylose reductase (XR), xylitol dehydrogenase (XDH), and xylulokinase, to form xylulose 5-phosphate, which enters pentose phosphate pathway. This Neosartorya fischeri (strain ATCC 1020 / DSM 3700 / CBS 544.65 / FGSC A1164 / JCM 1740 / NRRL 181 / WB 181) (Aspergillus fischerianus) protein is Probable D-xylulose kinase A (xkiA).